Here is a 346-residue protein sequence, read N- to C-terminus: Holliday junction branch migration complex subunit RuvB (346 aa).

Over residues Met-1 to Ala-11 the composition is skewed to polar residues. Positions Met-1–Ala-20 are disordered. Residues Met-1–Tyr-183 form a large ATPase domain (RuvB-L) region. Residues Ile-22, Arg-23, Gly-64, Lys-67, Thr-68, Thr-69, Glu-130–Phe-132, Arg-173, Tyr-183, and Arg-220 contribute to the ATP site. Thr-68 is a Mg(2+) binding site. A small ATPAse domain (RuvB-S) region spans residues Ser-184–Lys-254. A head domain (RuvB-H) region spans residues Pro-257–Phe-346. Residues Arg-293, Arg-312, and Arg-317 each contribute to the DNA site.

This sequence belongs to the RuvB family. In terms of assembly, homohexamer. Forms an RuvA(8)-RuvB(12)-Holliday junction (HJ) complex. HJ DNA is sandwiched between 2 RuvA tetramers; dsDNA enters through RuvA and exits via RuvB. An RuvB hexamer assembles on each DNA strand where it exits the tetramer. Each RuvB hexamer is contacted by two RuvA subunits (via domain III) on 2 adjacent RuvB subunits; this complex drives branch migration. In the full resolvosome a probable DNA-RuvA(4)-RuvB(12)-RuvC(2) complex forms which resolves the HJ.

Its subcellular location is the cytoplasm. It catalyses the reaction ATP + H2O = ADP + phosphate + H(+). The RuvA-RuvB-RuvC complex processes Holliday junction (HJ) DNA during genetic recombination and DNA repair, while the RuvA-RuvB complex plays an important role in the rescue of blocked DNA replication forks via replication fork reversal (RFR). RuvA specifically binds to HJ cruciform DNA, conferring on it an open structure. The RuvB hexamer acts as an ATP-dependent pump, pulling dsDNA into and through the RuvAB complex. RuvB forms 2 homohexamers on either side of HJ DNA bound by 1 or 2 RuvA tetramers; 4 subunits per hexamer contact DNA at a time. Coordinated motions by a converter formed by DNA-disengaged RuvB subunits stimulates ATP hydrolysis and nucleotide exchange. Immobilization of the converter enables RuvB to convert the ATP-contained energy into a lever motion, pulling 2 nucleotides of DNA out of the RuvA tetramer per ATP hydrolyzed, thus driving DNA branch migration. The RuvB motors rotate together with the DNA substrate, which together with the progressing nucleotide cycle form the mechanistic basis for DNA recombination by continuous HJ branch migration. Branch migration allows RuvC to scan DNA until it finds its consensus sequence, where it cleaves and resolves cruciform DNA. The polypeptide is Holliday junction branch migration complex subunit RuvB (Xanthomonas campestris pv. campestris (strain 8004)).